A 271-amino-acid chain; its full sequence is ATP synthase subunit a (271 aa).

Helical transmembrane passes span 38–58 (FWTLNIDSMFFSVVLGLLFLL), 100–120 (LIAPLALTIFVWVFLMNLMDL), 146–166 (DVNITLSMALGVFILILFYSI), 220–240 (LIFILIAGLLPWWSQWILNVP), and 242–262 (AIFHILIITLQAFIFMGLTIV).

Belongs to the ATPase A chain family. F-type ATPases have 2 components, CF(1) - the catalytic core - and CF(0) - the membrane proton channel. CF(1) has five subunits: alpha(3), beta(3), gamma(1), delta(1), epsilon(1). CF(0) has three main subunits: a(1), b(2) and c(9-12). The alpha and beta chains form an alternating ring which encloses part of the gamma chain. CF(1) is attached to CF(0) by a central stalk formed by the gamma and epsilon chains, while a peripheral stalk is formed by the delta and b chains.

It is found in the cell inner membrane. In terms of biological role, key component of the proton channel; it plays a direct role in the translocation of protons across the membrane. In Citrobacter koseri (strain ATCC BAA-895 / CDC 4225-83 / SGSC4696), this protein is ATP synthase subunit a.